A 354-amino-acid polypeptide reads, in one-letter code: UDP-N-acetylglucosamine--N-acetylmuramyl-(pentapeptide) pyrophosphoryl-undecaprenol N-acetylglucosamine transferase (354 aa).

UDP-N-acetyl-alpha-D-glucosamine contacts are provided by S196 and Q288.

This sequence belongs to the glycosyltransferase 28 family. MurG subfamily.

The protein localises to the cell membrane. The enzyme catalyses Mur2Ac(oyl-L-Ala-gamma-D-Glu-L-Lys-D-Ala-D-Ala)-di-trans,octa-cis-undecaprenyl diphosphate + UDP-N-acetyl-alpha-D-glucosamine = beta-D-GlcNAc-(1-&gt;4)-Mur2Ac(oyl-L-Ala-gamma-D-Glu-L-Lys-D-Ala-D-Ala)-di-trans,octa-cis-undecaprenyl diphosphate + UDP + H(+). It participates in cell wall biogenesis; peptidoglycan biosynthesis. Its function is as follows. Cell wall formation. Catalyzes the transfer of a GlcNAc subunit on undecaprenyl-pyrophosphoryl-MurNAc-pentapeptide (lipid intermediate I) to form undecaprenyl-pyrophosphoryl-MurNAc-(pentapeptide)GlcNAc (lipid intermediate II). This is UDP-N-acetylglucosamine--N-acetylmuramyl-(pentapeptide) pyrophosphoryl-undecaprenol N-acetylglucosamine transferase from Streptococcus suis (strain 98HAH33).